Here is a 75-residue protein sequence, read N- to C-terminus: UPF0352 protein KPN78578_25810 (75 aa).

The protein belongs to the UPF0352 family.

This is UPF0352 protein KPN78578_25810 from Klebsiella pneumoniae subsp. pneumoniae (strain ATCC 700721 / MGH 78578).